The chain runs to 185 residues: ATP synthase subunit b (185 aa).

Residues 27–47 form a helical membrane-spanning segment; that stretch reads GALIWKGLNILAFLGIVYYFG.

The protein belongs to the ATPase B chain family. As to quaternary structure, F-type ATPases have 2 components, F(1) - the catalytic core - and F(0) - the membrane proton channel. F(1) has five subunits: alpha(3), beta(3), gamma(1), delta(1), epsilon(1). F(0) has three main subunits: a(1), b(2) and c(10-14). The alpha and beta chains form an alternating ring which encloses part of the gamma chain. F(1) is attached to F(0) by a central stalk formed by the gamma and epsilon chains, while a peripheral stalk is formed by the delta and b chains.

The protein localises to the cell inner membrane. Functionally, f(1)F(0) ATP synthase produces ATP from ADP in the presence of a proton or sodium gradient. F-type ATPases consist of two structural domains, F(1) containing the extramembraneous catalytic core and F(0) containing the membrane proton channel, linked together by a central stalk and a peripheral stalk. During catalysis, ATP synthesis in the catalytic domain of F(1) is coupled via a rotary mechanism of the central stalk subunits to proton translocation. In terms of biological role, component of the F(0) channel, it forms part of the peripheral stalk, linking F(1) to F(0). The chain is ATP synthase subunit b from Aquifex aeolicus (strain VF5).